The chain runs to 509 residues: ATP synthase subunit alpha (509 aa).

Position 169–176 (169–176) interacts with ATP; sequence GDRQTGKT.

This sequence belongs to the ATPase alpha/beta chains family. F-type ATPases have 2 components, CF(1) - the catalytic core - and CF(0) - the membrane proton channel. CF(1) has five subunits: alpha(3), beta(3), gamma(1), delta(1), epsilon(1). CF(0) has three main subunits: a(1), b(2) and c(9-12). The alpha and beta chains form an alternating ring which encloses part of the gamma chain. CF(1) is attached to CF(0) by a central stalk formed by the gamma and epsilon chains, while a peripheral stalk is formed by the delta and b chains.

The protein localises to the cell inner membrane. It catalyses the reaction ATP + H2O + 4 H(+)(in) = ADP + phosphate + 5 H(+)(out). Its function is as follows. Produces ATP from ADP in the presence of a proton gradient across the membrane. The alpha chain is a regulatory subunit. The polypeptide is ATP synthase subunit alpha (Brucella anthropi (strain ATCC 49188 / DSM 6882 / CCUG 24695 / JCM 21032 / LMG 3331 / NBRC 15819 / NCTC 12168 / Alc 37) (Ochrobactrum anthropi)).